Reading from the N-terminus, the 380-residue chain is Erythronate-4-phosphate dehydrogenase (380 aa).

The substrate site is built by Ser45 and Thr66. NAD(+)-binding positions include Asp146, Thr174, 205-207, and Asp231; that span reads ASR. Arg207 is a catalytic residue. Glu236 is an active-site residue. His253 functions as the Proton donor in the catalytic mechanism. Position 256 (Gly256) interacts with NAD(+). A substrate-binding site is contributed by Tyr257.

This sequence belongs to the D-isomer specific 2-hydroxyacid dehydrogenase family. PdxB subfamily. Homodimer.

Its subcellular location is the cytoplasm. The enzyme catalyses 4-phospho-D-erythronate + NAD(+) = (R)-3-hydroxy-2-oxo-4-phosphooxybutanoate + NADH + H(+). The protein operates within cofactor biosynthesis; pyridoxine 5'-phosphate biosynthesis; pyridoxine 5'-phosphate from D-erythrose 4-phosphate: step 2/5. Catalyzes the oxidation of erythronate-4-phosphate to 3-hydroxy-2-oxo-4-phosphonooxybutanoate. This chain is Erythronate-4-phosphate dehydrogenase, found in Pseudomonas putida (strain GB-1).